Consider the following 252-residue polypeptide: 3-dehydroquinate dehydratase (252 aa).

3-dehydroquinate is bound by residues Ser21, Glu46–Arg48, and Arg82. The Proton donor/acceptor role is filled by His143. Lys170 serves as the catalytic Schiff-base intermediate with substrate. Arg213, Ser232, and Gln236 together coordinate 3-dehydroquinate.

This sequence belongs to the type-I 3-dehydroquinase family. Homodimer.

It carries out the reaction 3-dehydroquinate = 3-dehydroshikimate + H2O. It functions in the pathway metabolic intermediate biosynthesis; chorismate biosynthesis; chorismate from D-erythrose 4-phosphate and phosphoenolpyruvate: step 3/7. Its function is as follows. Involved in the third step of the chorismate pathway, which leads to the biosynthesis of aromatic amino acids. Catalyzes the cis-dehydration of 3-dehydroquinate (DHQ) and introduces the first double bond of the aromatic ring to yield 3-dehydroshikimate. The sequence is that of 3-dehydroquinate dehydratase from Escherichia coli O157:H7.